Consider the following 314-residue polypeptide: Acetaldehyde dehydrogenase 2 (314 aa).

Ser15–Ile18 provides a ligand contact to NAD(+). Cys133 acts as the Acyl-thioester intermediate in catalysis. NAD(+) is bound by residues Ser164–Asn172 and Asn291.

The protein belongs to the acetaldehyde dehydrogenase family.

It catalyses the reaction acetaldehyde + NAD(+) + CoA = acetyl-CoA + NADH + H(+). This chain is Acetaldehyde dehydrogenase 2, found in Pseudomonas putida (strain ATCC 700007 / DSM 6899 / JCM 31910 / BCRC 17059 / LMG 24140 / F1).